The following is a 326-amino-acid chain: ATP-dependent 6-phosphofructokinase 2 (326 aa).

G14 contacts ATP. 24–28 (RAVTR) provides a ligand contact to ADP. ATP-binding positions include 75–76 (RC) and 105–108 (GDGS). D106 is a Mg(2+) binding site. A substrate-binding site is contributed by 129–131 (TID). D131 functions as the Proton acceptor in the catalytic mechanism. R158 contributes to the ADP binding site. Substrate is bound by residues R166 and 173-175 (MGR). ADP is bound by residues 189-191 (GAE), K215, and 217-219 (KNS). Residues E226, R250, and 256–259 (HLQR) each bind substrate.

This sequence belongs to the phosphofructokinase type A (PFKA) family. ATP-dependent PFK group I subfamily. Prokaryotic clade 'B1' sub-subfamily. In terms of assembly, homotetramer. The cofactor is Mg(2+).

It localises to the cytoplasm. The catalysed reaction is beta-D-fructose 6-phosphate + ATP = beta-D-fructose 1,6-bisphosphate + ADP + H(+). The protein operates within carbohydrate degradation; glycolysis; D-glyceraldehyde 3-phosphate and glycerone phosphate from D-glucose: step 3/4. Its activity is regulated as follows. Allosterically activated by ADP and other diphosphonucleosides, and allosterically inhibited by phosphoenolpyruvate. Functionally, catalyzes the phosphorylation of D-fructose 6-phosphate to fructose 1,6-bisphosphate by ATP, the first committing step of glycolysis. This Bacteroides thetaiotaomicron (strain ATCC 29148 / DSM 2079 / JCM 5827 / CCUG 10774 / NCTC 10582 / VPI-5482 / E50) protein is ATP-dependent 6-phosphofructokinase 2.